We begin with the raw amino-acid sequence, 87 residues long: Type 3 secretion system needle filament protein (87 aa).

The protein belongs to the SctF family. The core secretion machinery of the T3SS is composed of approximately 20 different proteins, including cytoplasmic components, a base, an export apparatus and a needle. This subunit polymerizes and forms the helical needle filament. Forms high-order oligomers in vitro. Forms a stable ternary complex with the YscE-YscG chaperone. Interacts directly with YscG but makes very little direct contact with YscE. Interacts with the needle adapter protein YscI/SctI.

It is found in the secreted. The protein resides in the cell surface. The secretion and/or polymerization may be controlled by the type III secretion system regulator YopR. Interaction with YscE-YscG chaperone prevents premature polymerization of YscF/SctF in the bacterial cytosol and is required for its stability and efficient secretion. Interaction with the needle adapter protein YscI/SctI is required for YscF/SctF secretion, needle assembly and Yop secretion. The N-terminus varies among bacterial species, not only in amino acid composition but also in the number of amino acids, and may function in manipulating the host response to the advantage of the bacteria. In Y.pestis, the N-terminus can function to decrease cytokine induction, perhaps contributing to a favorable immune environment leading to survival of Y.pestis within the eukaryotic host. Functionally, component of the type III secretion system (T3SS), also called injectisome, which is used to inject bacterial effector proteins into eukaryotic host cells. YscF/SctF forms the external needle filament that protrudes from the bacterial surface. Essential for the calcium-dependent regulation of T3SS and Yop secretion. Required to block Yop secretion in the presence of extracellular calcium. May be the extracellular T3SS component that senses extracellular calcium and/or participates in transmitting the calcium signal to the cytoplasmic compartment where the block in secretion is initiated. Its function is as follows. During infection, can induce innate immune responses. The needle proteins interact with host TLR2 or TLR4, and induce signaling by NF-kappa-B and/or AP-1. This activation is MyD88 dependent and results in increased expression of cytokines, including TNF-alpha, IL-6 and IL-8. Innate immune responses are modulated by the N-terminal region of YscF/SctF. The chain is Type 3 secretion system needle filament protein from Yersinia pestis.